The following is a 122-amino-acid chain: Large ribosomal subunit protein uL14 (122 aa).

Belongs to the universal ribosomal protein uL14 family. As to quaternary structure, part of the 50S ribosomal subunit. Forms a cluster with proteins L3 and L19. In the 70S ribosome, L14 and L19 interact and together make contacts with the 16S rRNA in bridges B5 and B8.

Functionally, binds to 23S rRNA. Forms part of two intersubunit bridges in the 70S ribosome. This chain is Large ribosomal subunit protein uL14, found in Marinobacter nauticus (strain ATCC 700491 / DSM 11845 / VT8) (Marinobacter aquaeolei).